We begin with the raw amino-acid sequence, 246 residues long: Homeobox protein Crxos (246 aa).

2 consecutive DNA-binding regions (homeobox) follow at residues 22-72 (WEQL…EMRP) and 129-182 (ELTD…RGYR). A Nuclear localization signal motif is present at residues 163 to 177 (RKDLIRSWFITQRHR).

This sequence belongs to the paired homeobox family. As to expression, specifically expressed during the preimplantation stages of embryonic development, between the four-cell to eight-cell stage and the morula stage. Expressed in adult testis. In terms of tissue distribution, detected in early embryos; expression decreases gradually with embryonic development. Also expressed in extraembryonic tissues after E14.5, expression level increases drastically until E18.5, immediately before partum.

It localises to the nucleus. In terms of biological role, transcription factor that acts as a regulator of embryonic stem cell differentiation during the preimplantation stages of embryonic development. Transcription factor that acts as a positive regulator of embryonic stem cell differentiation. Its function is as follows. Transcription factor that promotes embryonic stem cell pluripotency. Functionally, transcription factor that promotes embryonic stem cell pluripotency. Also involved in extraembryonic tissues development by promoting the expression of placental prolactin family genes. The chain is Homeobox protein Crxos from Mus musculus (Mouse).